Here is a 431-residue protein sequence, read N- to C-terminus: MKYQRPKGTADILPSESAKWQYVEEKARELFKKYRYEEMRTPIFESFEVFSRTSGETSDIVTKEMYDFYDKGDRHITLRPEGTAGVVRSFVENKLYGPEVQKPFKTYYMGPMFRYERPQSGRLREFHQIGVEAFGVDNPTLDVEVMAMAVDLLKSFGLNSLRVAVNTLGDLETRNNYRQALIDYLEPFEAELSDDSKERLHKNPLRVLDSKDEKDKEIVANAPSILDYLTEDAQKHFETVKSLLNDLGIEYVIDSNMVRGLDYYNHTIFEIMSDSKAFNGKWTTVCAGGHYSGLVEQLGGPQTPGVGFGLGVERLLLILDAEEDTLPIENPLDVYVVGIGDVTNAVTLKLVQNLRHQGFTADRDYLNRKPKGQFKSANRLNARFTLTIGETELQEQEANLKFMKNGNEISVKLADVENDFASLEKLAVEGE.

It belongs to the class-II aminoacyl-tRNA synthetase family. Homodimer.

The protein resides in the cytoplasm. It catalyses the reaction tRNA(His) + L-histidine + ATP = L-histidyl-tRNA(His) + AMP + diphosphate + H(+). The chain is Histidine--tRNA ligase from Ligilactobacillus salivarius (strain UCC118) (Lactobacillus salivarius).